Consider the following 264-residue polypeptide: Thiazole synthase (264 aa).

Lysine 106 (schiff-base intermediate with DXP) is an active-site residue. 1-deoxy-D-xylulose 5-phosphate contacts are provided by residues glycine 167, alanine 193–glycine 194, and asparagine 215–serine 216.

It belongs to the ThiG family. As to quaternary structure, homotetramer. Forms heterodimers with either ThiH or ThiS.

Its subcellular location is the cytoplasm. The catalysed reaction is [ThiS sulfur-carrier protein]-C-terminal-Gly-aminoethanethioate + 2-iminoacetate + 1-deoxy-D-xylulose 5-phosphate = [ThiS sulfur-carrier protein]-C-terminal Gly-Gly + 2-[(2R,5Z)-2-carboxy-4-methylthiazol-5(2H)-ylidene]ethyl phosphate + 2 H2O + H(+). Its pathway is cofactor biosynthesis; thiamine diphosphate biosynthesis. In terms of biological role, catalyzes the rearrangement of 1-deoxy-D-xylulose 5-phosphate (DXP) to produce the thiazole phosphate moiety of thiamine. Sulfur is provided by the thiocarboxylate moiety of the carrier protein ThiS. In vitro, sulfur can be provided by H(2)S. The polypeptide is Thiazole synthase (Pseudomonas savastanoi pv. phaseolicola (strain 1448A / Race 6) (Pseudomonas syringae pv. phaseolicola (strain 1448A / Race 6))).